The following is a 194-amino-acid chain: Probable WRKY transcription factor 51 (194 aa).

The tract at residues 58–97 (SSETFTGESGGSGSATTLSKKESTNRGSKESDQTKETGHR) is disordered. A compositionally biased stretch (basic and acidic residues) spans 76–96 (SKKESTNRGSKESDQTKETGH). A DNA-binding region (WRKY) is located at residues 104–169 (SKIDVMDDGF…YEGVHNHESL (66 aa)).

It belongs to the WRKY group II-c family. In terms of assembly, interacts with CAMBP25/VQ15.

Its subcellular location is the nucleus. Its function is as follows. Transcription factor. Interacts specifically with the W box (5'-(T)TGAC[CT]-3'), a frequently occurring elicitor-responsive cis-acting element. Involved in defense responses. May act as positive regulator of salicylic acid (SA)-mediated signaling and negative regulator of jasmonic acid (JA)-mediated signaling. This is Probable WRKY transcription factor 51 (WRKY51) from Arabidopsis thaliana (Mouse-ear cress).